An 85-amino-acid polypeptide reads, in one-letter code: MAHKKAGGSTRNGRDSEAKRLGVKRFGGEAVLAGSIIVRQRGTKFHAGTNVGCGRDHTLFAKADGKVKFEVKGPKNRKYISIVAE.

Residues 1–20 (MAHKKAGGSTRNGRDSEAKR) form a disordered region.

The protein belongs to the bacterial ribosomal protein bL27 family.

This chain is Large ribosomal subunit protein bL27, found in Salmonella agona (strain SL483).